Consider the following 204-residue polypeptide: UPF0056 membrane protein CT_852 (204 aa).

6 consecutive transmembrane segments (helical) span residues 9–29, 39–59, 66–86, 107–127, 138–158, and 176–196; these read TLLFYALFNALGSLPVFIALL, HIILRESIFALLLLLLFVTFG, LGIILPAFQFTGSLLLGSIAI, IFFPLAFPVITGPAMITSTLG, IVLGAIVLAWLFSLITLLLSS, and FGISLALMAGNLMLKALSTAF.

This sequence belongs to the UPF0056 (MarC) family.

Its subcellular location is the cell membrane. This Chlamydia trachomatis serovar D (strain ATCC VR-885 / DSM 19411 / UW-3/Cx) protein is UPF0056 membrane protein CT_852.